The primary structure comprises 219 residues: Protein RhiB (219 aa).

Over residues 174-195 (AGISQQGNAAGTSISSKSTGSP) the composition is skewed to polar residues. A disordered region spans residues 174–201 (AGISQQGNAAGTSISSKSTGSPENPART).

Its function is as follows. May be involved in plant-microbe interaction. This chain is Protein RhiB (rhiB), found in Rhizobium leguminosarum bv. viciae.